A 505-amino-acid polypeptide reads, in one-letter code: MEWEWSYVFFSAIIILPAFILFFSQKNTTKSSYKFPPGPPGLPIFGNMFELGTEPYKKMAVLRQKYGPVLWLKLGSTYTMVVQTAQASEELFKNHDISFANRVIPDVNQAHSYYQGSLAIAPYGPFWRFQRRICTIEMFVHKKISETEPVRRKCVDNMLKWIEKEANSAEKGSGIEVTRFVFLASFNMLGNLILSKDLADLESEEASEFFIAMKRINEWSGIANVSDIFPFLKKFDLQSLRKKMARDMGKAVEIMSMFLKEREEERKKGTEKGKDFLDVLLEFQGTGKDEPAKLSEHEIKIFVLEMFLAGTETTSSSVEWALTELLRHPEAMAKVKTEISQAIEPNRKFEDSDIENLPYMQAVLKESLRLHPPLPFLIPRETIQDTKFMGYDVPKDTQVLVNAWAIGRDPECWDDPMSFKPERFLGSKIDVKGQHYGLIPFGAGRRMCVGLPLGHRMMHFALGSLLREFEWELPDGVSPKSINMDGSMGVTARKRDSLKVIPKKA.

Residue Cys-448 coordinates heme.

The protein belongs to the cytochrome P450 family. Heme serves as cofactor.

The protein is Cytochrome P450 76A2 (CYP76A2) of Solanum melongena (Eggplant).